The primary structure comprises 54 residues: Protein hunchback (54 aa).

C2H2-type zinc fingers lie at residues 1–3, 9–31, and 37–54; these read RKH, FQCD…RKFH, and YRCA…SFKL.

The protein belongs to the hunchback C2H2-type zinc-finger protein family.

It localises to the nucleus. In terms of biological role, gap class segmentation protein that controls development of head structures. The protein is Protein hunchback (hb) of Calliphora vicina (Blue blowfly).